Here is a 124-residue protein sequence, read N- to C-terminus: UPF0102 protein TM1040_0449 (124 aa).

This sequence belongs to the UPF0102 family.

The polypeptide is UPF0102 protein TM1040_0449 (Ruegeria sp. (strain TM1040) (Silicibacter sp.)).